The following is a 464-amino-acid chain: Keratin, type I cytoskeletal 28 (464 aa).

A head region spans residues 1 to 85; sequence MSLRFSSGSR…GSEGGLFSGN (85 aa). The coil 1A stretch occupies residues 86–121; the sequence is EKVTMQNLNDRLASYLDNVRALEEANAELERKIKSW. An IF rod domain is found at 86–401; that stretch reads EKVTMQNLND…RLIDGDRNSC (316 aa). The segment at 122–143 is linker 1; the sequence is YEKHGPGSCHGLDHDYSRYHLT. The segment at 144-235 is coil 1B; that stretch reads IEDLKNKIIS…KNHEEEVKAL (92 aa). The linker 12 stretch occupies residues 236–258; it reads QCVAGGNVNVEMNAAPGVDLTLL. A coil 2 region spans residues 259–397; it reads LNNMRAEYED…ETYCRLIDGD (139 aa). The interval 398–464 is tail; the sequence is RNSCSKSKGF…NGKTKQRVPF (67 aa). Positions 402-417 are enriched in low complexity; it reads SKSKGFGSGSPGNSSK. 2 disordered regions span residues 402–422 and 440–464; these read SKSK…LSRT and SSRV…RVPF.

Belongs to the intermediate filament family. Heterotetramer of two type I and two type II keratins.

It localises to the cytoplasm. Functionally, essential for the proper assembly of types I and II keratin protein complexes and the formation of keratin intermediate filaments in the inner root sheath (irs). The protein is Keratin, type I cytoskeletal 28 of Bos taurus (Bovine).